The following is a 373-amino-acid chain: MTDNSKIRVVVGMSGGVDSSVTALLLKEQGYDVIGVFMKNWDDTDEFGVCTATEDYKDVAAVADQIGIPYYSVNFEKEYWDRVFEYFLAEYRAGRTPNPDVMCNKEIKFKAFLDYAMTLGADYVATGHYAQVKRDENGTVHMLRGADNGKDQTYFLSQLSQEQLQKTLFPLGHLQKSEVREIAERAGLATAKKKDSTGICFIGEKNFKQFLSQYLPAQKGRMMTIDGRDMGEHAGLMYYTIGQRGGLGIGGQHGGDNQPWFVVGKDLSQNILYVGQGFYHEALMSNSLDASVIHFTREMPEEFTFECTAKFRYRQPDSHVTVHVRGDKAEVVFAEPQRAITPGQAVVFYDGKECLGGGMIDMAYKNGQPCQYI.

Residues 12–19 and methionine 38 contribute to the ATP site; that span reads GMSGGVDS. The segment at 98 to 100 is interaction with target base in tRNA; that stretch reads NPD. The active-site Nucleophile is the cysteine 103. A disulfide bridge links cysteine 103 with cysteine 200. Glycine 127 contributes to the ATP binding site. The interval 150–152 is interaction with tRNA; that stretch reads KDQ. Cysteine 200 (cysteine persulfide intermediate) is an active-site residue. Residues 312 to 313 are interaction with tRNA; sequence RY.

This sequence belongs to the MnmA/TRMU family.

The protein localises to the cytoplasm. It carries out the reaction S-sulfanyl-L-cysteinyl-[protein] + uridine(34) in tRNA + AH2 + ATP = 2-thiouridine(34) in tRNA + L-cysteinyl-[protein] + A + AMP + diphosphate + H(+). Its function is as follows. Catalyzes the 2-thiolation of uridine at the wobble position (U34) of tRNA, leading to the formation of s(2)U34. In Streptococcus pyogenes serotype M12 (strain MGAS2096), this protein is tRNA-specific 2-thiouridylase MnmA.